Reading from the N-terminus, the 30-residue chain is Trypsin inhibitor 6 (30 aa).

Cystine bridges form between Cys4/Cys21, Cys11/Cys23, and Cys17/Cys29.

Belongs to the protease inhibitor I7 (squash-type serine protease inhibitor) family.

Its subcellular location is the secreted. In terms of biological role, strongly inhibits trypsin, weakly inhibits chymotrypsin. This chain is Trypsin inhibitor 6, found in Cyclanthera pedata (Achocha).